Reading from the N-terminus, the 403-residue chain is Exodeoxyribonuclease 7 large subunit (403 aa).

The protein belongs to the XseA family. In terms of assembly, heterooligomer composed of large and small subunits.

It is found in the cytoplasm. It catalyses the reaction Exonucleolytic cleavage in either 5'- to 3'- or 3'- to 5'-direction to yield nucleoside 5'-phosphates.. In terms of biological role, bidirectionally degrades single-stranded DNA into large acid-insoluble oligonucleotides, which are then degraded further into small acid-soluble oligonucleotides. The polypeptide is Exodeoxyribonuclease 7 large subunit (Clostridium botulinum (strain Okra / Type B1)).